The chain runs to 192 residues: ADP-ribosylation factor-like protein 14 (192 aa).

The N-myristoyl glycine moiety is linked to residue Gly-2. Residues 20–27 (GLDSAGKS), 64–68 (DVGGQ), and 123–126 (NKQD) contribute to the GTP site.

The protein belongs to the small GTPase superfamily. Arf family. In terms of assembly, interacts with ARL14EP. As to expression, expressed in immature dendritic cells.

Its subcellular location is the cytoplasmic vesicle. Its function is as follows. GTPase that recruits MYO1E to MHC class II-containing vesicles via the effector protein ARL14EP and hence controls the movement of these vesicles along the actin cytoskeleton in dendritic cells. The protein is ADP-ribosylation factor-like protein 14 (ARL14) of Homo sapiens (Human).